A 189-amino-acid chain; its full sequence is Early E3 20.5 kDa glycoprotein (189 aa).

N-linked (GlcNAc...) asparagine; by host glycans are attached at residues asparagine 73 and asparagine 137.

It belongs to the adenoviridae E3_20 family.

In terms of biological role, E3 proteins seem to be dispensable for virus growth in tissue culture cells. They are potentially important for virus growth under special conditions; E3 region may help adenoviruses to evade the immune surveillance of the host. In Homo sapiens (Human), this protein is Early E3 20.5 kDa glycoprotein.